The following is a 594-amino-acid chain: Alanine--tRNA ligase (594 aa).

Zn(2+) is bound by residues His456, His460, Cys558, and His562.

Belongs to the class-II aminoacyl-tRNA synthetase family. Requires Zn(2+) as cofactor.

It is found in the cytoplasm. The catalysed reaction is tRNA(Ala) + L-alanine + ATP = L-alanyl-tRNA(Ala) + AMP + diphosphate. Its function is as follows. Catalyzes the attachment of alanine to tRNA(Ala) in a two-step reaction: alanine is first activated by ATP to form Ala-AMP and then transferred to the acceptor end of tRNA(Ala). Also edits incorrectly charged Ser-tRNA(Ala) and Gly-tRNA(Ala) via its editing domain. The sequence is that of Alanine--tRNA ligase (alaS) from Borrelia garinii subsp. bavariensis (strain ATCC BAA-2496 / DSM 23469 / PBi) (Borreliella bavariensis).